The sequence spans 639 residues: 3-oxocholoyl-CoA 4-desaturase (639 aa).

FMN is bound at residue glutamine 101. 155 to 158 (HAAH) contributes to the substrate binding site. Tyrosine 160 functions as the Proton donor in the catalytic mechanism. Residues arginine 208, arginine 286, and 308-309 (GR) each bind FMN. Residues cysteine 332 and cysteine 335 each coordinate [4Fe-4S] cluster. Position 337 (glutamine 337) interacts with FAD. Positions 339 and 353 each coordinate [4Fe-4S] cluster. Residues alanine 383, glutamate 402, glutamine 410, lysine 420, and valine 447 each contribute to the FAD site.

This sequence in the N-terminal section; belongs to the NADH:flavin oxidoreductase/NADH oxidase family. Requires FMN as cofactor. FAD serves as cofactor. [4Fe-4S] cluster is required as a cofactor.

It carries out the reaction 7alpha,12alpha-dihydroxy-3-oxochol-24-oyl-CoA + NAD(+) = 7alpha,12alpha-dihydroxy-3-oxochol-4-en-24-oyl-CoA + NADH + H(+). The enzyme catalyses 7alpha-hydroxy-3-oxochol-24-oyl-CoA + NAD(+) = 7alpha-hydroxy-3-oxochol-4-en-24-oyl-CoA + NADH + H(+). Its pathway is lipid metabolism; bile acid degradation. Functionally, stereo-specific NAD(H)-dependent 3-oxo-delta4-cholenoic acid oxidoreductase involved in bile acid 7alpha-dehydroxylation. This Clostridium scindens (strain JCM 10418 / VPI 12708) protein is 3-oxocholoyl-CoA 4-desaturase.